Reading from the N-terminus, the 210-residue chain is Calcineurin B-like protein 4 (210 aa).

Residue G2 is the site of N-myristoyl glycine attachment. EF-hand domains are found at residues 31–66, 67–102, 104–139, and 148–183; these read EVEA…RNSR, KANL…FHPK, PKSE…LLDE, and AVEA…NPAS. D161, N163, D165, R167, and E172 together coordinate Ca(2+).

This sequence belongs to the calcineurin regulatory subunit family. As to quaternary structure, homodimer. Interacts with CIPK24. Expressed in leaves.

It is found in the cell membrane. Its function is as follows. Acts as a calcium sensor involved in the regulatory pathway for the control of intracellular Na(+) and K(+) homeostasis and salt tolerance. Operates in synergy with CIPK24 to activate the plasma membrane Na(+)/H(+) antiporter SOS1. May function as positive regulator of salt stress responses. CBL proteins interact with CIPK serine-threonine protein kinases. Binding of a CBL protein to the regulatory NAF domain of a CIPK protein lead to the activation of the kinase in a calcium-dependent manner. The chain is Calcineurin B-like protein 4 (CBL4) from Oryza sativa subsp. japonica (Rice).